A 67-amino-acid polypeptide reads, in one-letter code: DNA-directed RNA polymerase subunit omega (67 aa).

This sequence belongs to the RNA polymerase subunit omega family. In terms of assembly, the RNAP catalytic core consists of 2 alpha, 1 beta, 1 beta' and 1 omega subunit. When a sigma factor is associated with the core the holoenzyme is formed, which can initiate transcription.

It catalyses the reaction RNA(n) + a ribonucleoside 5'-triphosphate = RNA(n+1) + diphosphate. Promotes RNA polymerase assembly. Latches the N- and C-terminal regions of the beta' subunit thereby facilitating its interaction with the beta and alpha subunits. The chain is DNA-directed RNA polymerase subunit omega from Bordetella pertussis (strain Tohama I / ATCC BAA-589 / NCTC 13251).